A 240-amino-acid polypeptide reads, in one-letter code: NADPH-flavin oxidoreductase (240 aa).

FMN contacts are provided by residues 11–15, S39, 67–69, 128–131, and 167–169; these read HRSIR, QAY, YIGG, and KPR.

It belongs to the flavin oxidoreductase frp family. Homodimer.

It carries out the reaction FMNH2 + NADP(+) = FMN + NADPH + 2 H(+). Functionally, catalyzes the NADPH-dependent reduction of FMN to FMNH(2). Involved in bioluminescence by providing FMNH(2) to luciferase. This chain is NADPH-flavin oxidoreductase, found in Vibrio harveyi (Beneckea harveyi).